Here is a 369-residue protein sequence, read N- to C-terminus: C-C chemokine receptor type 9 (369 aa).

Residues 1 to 48 are Extracellular-facing; the sequence is MTPTDFTSPIPNMADDYGSESTSSMEDYVNFNFTDFYCEKNNVRQFAS. A glycan (N-linked (GlcNAc...) asparagine) is linked at Asn-32. Cystine bridges form between Cys-38–Cys-289 and Cys-119–Cys-198. The helical transmembrane segment at 49 to 74 threads the bilayer; it reads HFLPPLYWLVFIVGALGNSLVILVYW. At 75–85 the chain is on the cytoplasmic side; it reads YCTRVKTMTDM. A helical transmembrane segment spans residues 86-109; it reads FLLNLAIADLLFLVTLPFWAIAAA. The Extracellular portion of the chain corresponds to 110–120; that stretch reads DQWKFQTFMCK. The helical transmembrane segment at 121-150 threads the bilayer; the sequence is VVNSMYKMNFYSCVLLIMCISVDRYIAIAQ. At 151–159 the chain is on the cytoplasmic side; it reads AMRAHTWRE. The helical transmembrane segment at 160–185 threads the bilayer; that stretch reads KRLLYSKMVCFTIWVLAAALCIPEIL. Topologically, residues 186-208 are extracellular; it reads YSQIKEESGIAICTMVYPSDEST. A helical membrane pass occupies residues 209–243; it reads KLKSAVLTLKVILGFFLPFVVMACCYTIIIHTLIQ. Residues 244–248 lie on the Cytoplasmic side of the membrane; that stretch reads AKKSS. A helical membrane pass occupies residues 249-283; that stretch reads KHKALKVTITVLTVFVLSQFPYNCILLVQTIDAYA. Topologically, residues 284–290 are extracellular; that stretch reads MFISNCA. The helical transmembrane segment at 291–321 threads the bilayer; the sequence is VSTNIDICFQVTQTIAFFHSCLNPVLYVFVG. Residues 322-369 lie on the Cytoplasmic side of the membrane; sequence ERFRRDLVKTLKNLGCISQAQWVSFTRREGSLKLSSMLLETTSGALSL.

The protein belongs to the G-protein coupled receptor 1 family. In terms of tissue distribution, highly expressed in the thymus and low in lymph nodes and spleen.

It localises to the cell membrane. In terms of biological role, receptor for chemokine SCYA25/TECK. Subsequently transduces a signal by increasing the intracellular calcium ions level. Functionally, (Microbial infection) Alternative coreceptor with CD4 for HIV-1 infection. This is C-C chemokine receptor type 9 (CCR9) from Homo sapiens (Human).